Consider the following 95-residue polypeptide: Large ribosomal subunit protein uL23 (95 aa).

This sequence belongs to the universal ribosomal protein uL23 family. In terms of assembly, part of the 50S ribosomal subunit. Contacts protein L29, and trigger factor when it is bound to the ribosome.

In terms of biological role, one of the early assembly proteins it binds 23S rRNA. One of the proteins that surrounds the polypeptide exit tunnel on the outside of the ribosome. Forms the main docking site for trigger factor binding to the ribosome. This Coxiella burnetii (strain RSA 493 / Nine Mile phase I) protein is Large ribosomal subunit protein uL23.